Reading from the N-terminus, the 509-residue chain is tRNA (guanine(37)-N(1))-methyltransferase (509 aa).

A mitochondrion-targeting transit peptide spans 1–57; the sequence is MVLWILWRPFGFSRRLLKLERHSITESKSLIPLAWTSLTQTLSESPGIFLLGQRKRF. S-adenosyl-L-methionine-binding positions include histidine 289, 327-328, 355-356, and asparagine 387; these read DL and DG. A disordered region spans residues 478-509; sequence TKNPENHEDPPLKRQRTAEAFSDEKTQIASNT.

The protein belongs to the class I-like SAM-binding methyltransferase superfamily. TRM5/TYW2 family. Monomer.

The protein resides in the mitochondrion matrix. Its subcellular location is the nucleus. The protein localises to the cytoplasm. It carries out the reaction guanosine(37) in tRNA + S-adenosyl-L-methionine = N(1)-methylguanosine(37) in tRNA + S-adenosyl-L-homocysteine + H(+). Functionally, involved in mitochondrial tRNA methylation. Specifically methylates the N1 position of guanosine-37 in various tRNAs. Methylation is not dependent on the nature of the nucleoside 5' of the target nucleoside. This is the first step in the biosynthesis of wybutosine (yW), a modified base adjacent to the anticodon of tRNAs and required for accurate decoding. This Macaca fascicularis (Crab-eating macaque) protein is tRNA (guanine(37)-N(1))-methyltransferase.